A 386-amino-acid polypeptide reads, in one-letter code: Palmitoyltransferase ZDHHC18 (386 aa).

Positions 1–65 (MKDCEYQQIS…GSGSLGRRPR (65 aa)) are disordered. At 1–88 (MKDCEYQQIS…CGGRLMLAGH (88 aa)) the chain is on the cytoplasmic side. S19 bears the Phosphoserine mark. The span at 27-40 (PAAPPGPSPGPAPG) shows a compositional bias: pro residues. A compositionally biased stretch (gly residues) spans 49–59 (SGSGSGSGSGS). A helical transmembrane segment spans residues 89-109 (GGVFALTLLLILSTTILFFIF). Residues 110-117 (DCPYLART) lie on the Lumenal side of the membrane. A helical membrane pass occupies residues 118–138 (LTLAIPIIAAILFFFVMSCLL). At 139-233 (QTSFTDPGIL…GNCVGRRNYR (95 aa)) the chain is on the cytoplasmic side. The region spanning 190–240 (KYCFTCKMFRPPRTSHCSVCDNCVERFDHHCPWVGNCVGRRNYRFFYAFIL) is the DHHC domain. C220 functions as the S-palmitoyl cysteine intermediate in the catalytic mechanism. A helical transmembrane segment spans residues 234 to 254 (FFYAFILSLSFLTAFIFACVV). Topologically, residues 255–275 (THLTLLSQGSNFLSALNKTPA) are lumenal. Residues 276-296 (GVLELVICFFSIWSILGLSGF) form a helical membrane-spanning segment. Residues 297-386 (HTYLVASNLT…PDASMVGGHP (90 aa)) lie on the Cytoplasmic side of the membrane. A disordered region spans residues 362 to 386 (LPSPIRSDEPACGAKPDASMVGGHP).

The protein belongs to the DHHC palmitoyltransferase family. ERF2/ZDHHC9 subfamily.

The protein resides in the golgi apparatus membrane. It catalyses the reaction L-cysteinyl-[protein] + hexadecanoyl-CoA = S-hexadecanoyl-L-cysteinyl-[protein] + CoA. Its function is as follows. Palmitoyltransferase that catalyzes the addition of palmitate onto various protein substrates, such as CGAS, HRAS and LCK. Acts as a negative regulator of the cGAS-STING pathway be mediating palmitoylation and inactivation of CGAS. May also have a palmitoyltransferase activity toward the beta-2 adrenergic receptor/ADRB2 and therefore regulate G protein-coupled receptor signaling. This is Palmitoyltransferase ZDHHC18 from Rattus norvegicus (Rat).